The chain runs to 161 residues: tRNA-specific adenosine deaminase (161 aa).

In terms of domain architecture, CMP/dCMP-type deaminase spans 2–120; that stretch reads TQDELYMKEA…GTLMNLLQEE (119 aa). Histidine 53 provides a ligand contact to Zn(2+). Glutamate 55 (proton donor) is an active-site residue. Positions 83 and 86 each coordinate Zn(2+).

This sequence belongs to the cytidine and deoxycytidylate deaminase family. In terms of assembly, homodimer. The cofactor is Zn(2+).

It catalyses the reaction adenosine(34) in tRNA + H2O + H(+) = inosine(34) in tRNA + NH4(+). Its function is as follows. Catalyzes the deamination of adenosine to inosine at the wobble position 34 of tRNA(Arg2). The polypeptide is tRNA-specific adenosine deaminase (Bacillus subtilis (strain 168)).